The chain runs to 918 residues: Glutamate receptor ionotropic, kainate 1 (918 aa).

Residues 1-30 (MEHGTLLAQPGLWTRDTSWALLYFLCYILP) form the signal peptide. The Extracellular portion of the chain corresponds to 31 to 576 (QTAPQVLRIG…VFSFLNPLSP (546 aa)). Residues asparagine 68, asparagine 74, asparagine 276, asparagine 379, asparagine 428, asparagine 439, and asparagine 446 are each glycosylated (N-linked (GlcNAc...) asparagine). L-glutamate is bound by residues proline 531, threonine 533, and arginine 538. A glycan (N-linked (GlcNAc...) asparagine) is linked at asparagine 561. The chain crosses the membrane as a helical span at residues 577-597 (DIWMYVLLACLGVSCVLFVIA). The Cytoplasmic portion of the chain corresponds to 598–653 (RFTPYEWYNPHPCNPDSDVVENNFTLLNSFWFGVGALMQQGSELMPKALSTRIVGG). The chain crosses the membrane as a helical span at residues 654 to 674 (IWWFFTLIIISSYTANLAAFL). The Extracellular segment spans residues 675–834 (TVERMESPID…KEASALGVEN (160 aa)). The L-glutamate site is built by serine 704 and threonine 705. Serine 725 bears the Phosphoserine; by PKC mark. Residue glutamate 753 coordinates L-glutamate. Residue threonine 761 is modified to Phosphothreonine; by PKC. Cysteine 765 and cysteine 819 form a disulfide bridge. N-linked (GlcNAc...) asparagine glycosylation is present at asparagine 766. A helical transmembrane segment spans residues 835–855 (IGGIFIVLAAGLVLSVFVAIG). Over 856–918 (EFIYKSRKNN…IRKQSSVHTV (63 aa)) the chain is Cytoplasmic.

This sequence belongs to the glutamate-gated ion channel (TC 1.A.10.1) family. GRIK1 subfamily. In terms of assembly, homotetramer or heterotetramer of pore-forming glutamate receptor subunits. Tetramers may be formed by the dimerization of dimers. Can form functional heteromeric receptors with GRIK5. Can form functional heteromeric receptors with GRIK4. Interacts with KLHL17.

The protein resides in the cell membrane. It localises to the postsynaptic cell membrane. It carries out the reaction Ca(2+)(in) = Ca(2+)(out). Functionally, ionotropic glutamate receptor that functions as a cation-permeable ligand-gated ion channel, gated by L-glutamate and the glutamatergic agonist kainic acid. L-glutamate acts as an excitatory neurotransmitter at many synapses in the central nervous system. Binding of the excitatory neurotransmitter L-glutamate induces a conformation change, leading to the opening of the cation channel, and thereby converts the chemical signal to an electrical impulse. The receptor then desensitizes rapidly and enters a transient inactive state, characterized by the presence of bound agonist. Its function is as follows. Ionotropic glutamate receptor that functions as a cation-permeable ligand-gated ion channel, gated by L-glutamate and the glutamatergic agonist kainic acid. The protein is Glutamate receptor ionotropic, kainate 1 (GRIK1) of Homo sapiens (Human).